The primary structure comprises 436 residues: Hydrogenobyrinate a,c-diamide synthase (436 aa).

One can recognise a GATase cobBQ-type domain in the interval Arg244–Ala435. Cys327 (nucleophile) is an active-site residue.

This sequence belongs to the CobB/CbiA family. Requires Mg(2+) as cofactor.

It carries out the reaction hydrogenobyrinate + 2 L-glutamine + 2 ATP + 2 H2O = hydrogenobyrinate a,c-diamide + 2 L-glutamate + 2 ADP + 2 phosphate + 2 H(+). It participates in cofactor biosynthesis; adenosylcobalamin biosynthesis; cob(II)yrinate a,c-diamide from precorrin-2 (aerobic route): step 9/10. In terms of biological role, catalyzes the ATP-dependent amidation of the two carboxylate groups at positions a and c of hydrogenobyrinate, using either L-glutamine or ammonia as the nitrogen source. In Brucella suis biovar 1 (strain 1330), this protein is Hydrogenobyrinate a,c-diamide synthase.